Consider the following 404-residue polypeptide: Lipase lipl-3 (404 aa).

A signal peptide spans 1–20 (MCSSLCALLLVILAVHNVHA). N-linked (GlcNAc...) asparagine glycosylation occurs at N65. The active-site Nucleophile is the S168. A glycan (N-linked (GlcNAc...) asparagine) is linked at N272. Catalysis depends on charge relay system residues D344 and H376.

Belongs to the AB hydrolase superfamily. Lipase family.

The protein resides in the secreted. Its subcellular location is the lysosome lumen. Its function is as follows. Lipase that, together with lipl-1, plays a role in the response to nutrient deprivation by controlling lipid metabolism. Specifically, involved in the breakdown of lipids during lipophagy, a process during which lipids contained in lipid droplets that have been delivered to lysosomes by autophagy are degraded. This Caenorhabditis elegans protein is Lipase lipl-3.